We begin with the raw amino-acid sequence, 3473 residues long: AP2/ERF domain-containing protein PFD0985w (3473 aa).

9 disordered regions span residues 35-61, 366-450, 647-704, 750-801, 1096-1196, 1300-1328, 1388-1418, 1773-1807, and 1864-1898; these read NNII…NNNN, KMER…HLVC, NNNN…INAK, NIIK…RKKK, VDNN…MNMN, DNTS…NSRG, HLRS…GAER, NNTG…NNKV, and IGED…NNLS. Composition is skewed to low complexity over residues 44–61, 396–442, and 647–666; these read NGHN…NNNN, NNND…NSNN, and NNNN…NNNN. Residues 683–694 show a composition bias toward basic and acidic residues; that stretch reads TGDKHETSKKED. Positions 751 to 768 are enriched in low complexity; sequence IIKSDNVNNNNNNNNNNN. The span at 785-801 shows a compositional bias: basic residues; it reads NKKHKKKNIHDNNRKKK. Positions 1098–1156 are enriched in low complexity; sequence NNNNNNNNNNNNNVNNISNNGTNLEENANNANNANNPNNANNPNNANNSNNADYVNDYN. The segment covering 1160–1171 has biased composition (acidic residues); it reads KEEDDDDEEEDN. Positions 1182-1196 are enriched in low complexity; it reads TNYNININGENMNMN. Composition is skewed to polar residues over residues 1314–1326 and 1390–1412; these read VGSN…NNNS and RSSN…SSMR. Low complexity predominate over residues 1773-1805; that stretch reads NNTGTTQNNNKYGTNSNNNNNNNNNNNNNNNNN. Residues 1881 to 1893 are compositionally biased toward basic residues; sequence LKRRKNGNSKRAK. Residues 1957–2011 constitute a DNA-binding region (AP2/ERF 1); sequence PLPTGVYFDSARKLWRCQWKENGKFKTKGFSLIHYSTLEEARKQCILYRCDVGNI. 8 disordered regions span residues 2068-2088, 2319-2343, 2387-2470, 2520-2584, 2609-2677, 2840-2860, 2881-2902, and 2937-2960; these read EKTG…NVNN, QVDV…SNSK, TNDN…NIRS, LGNG…NYNN, LYGK…PASN, MNNN…NNVK, NDKL…SSSP, and KYVE…KKDE. Basic residues predominate over residues 2333 to 2342; sequence KRSKRSKSNS. 2 stretches are compositionally biased toward low complexity: residues 2388–2400 and 2409–2460; these read NDNN…NNND and DNNN…NNND. Acidic residues predominate over residues 2525-2542; the sequence is DGEEEGGGDYDEKEDDLL. Low complexity-rich tracts occupy residues 2557–2584 and 2615–2624; these read NNNN…NYNN and NNNNNNNNNN. Residues 2663–2675 show a composition bias toward polar residues; that stretch reads LLNSQVNESSAPA. A compositionally biased stretch (low complexity) spans 2841–2858; the sequence is NNNNNNNNNNNNNNNNNN. A compositionally biased stretch (basic and acidic residues) spans 2943 to 2953; sequence NGDKETNDYNT. Positions 3268 to 3321 form a DNA-binding region, AP2/ERF 2; the sequence is SLPKGIYYDHAKKLYRVQYIINNSIKTKGFSVKKLGLAQAKIEAESFRNFCLEN. The segment covering 3369 to 3391 has biased composition (low complexity); it reads KMSINNDGNNNDGNNNDGNNNDD. The tract at residues 3369 to 3473 is disordered; the sequence is KMSINNDGNN…NNDNEMSQNE (105 aa). A compositionally biased stretch (acidic residues) spans 3392–3403; sequence NNNDDNNNDDNN. Residues 3404–3457 show a composition bias toward low complexity; it reads NDGNNNDDNNNEGINNDDNNNEGINNDDNNNEGINNNDDNNNNDDNNNEGINND.

It localises to the nucleus. This Plasmodium falciparum (isolate 3D7) protein is AP2/ERF domain-containing protein PFD0985w.